A 246-amino-acid polypeptide reads, in one-letter code: Proteasome subunit alpha type-6 (246 aa).

Belongs to the peptidase T1A family. The 26S proteasome consists of a 20S proteasome core and two 19S regulatory subunits. The 20S proteasome core is composed of 28 subunits that are arranged in four stacked rings, resulting in a barrel-shaped structure. The two end rings are each formed by seven alpha subunits, and the two central rings are each formed by seven beta subunits. The catalytic chamber with the active sites is on the inside of the barrel.

The protein resides in the cytoplasm. It localises to the nucleus. In terms of biological role, the proteasome is a multicatalytic proteinase complex which is characterized by its ability to cleave peptides with Arg, Phe, Tyr, Leu, and Glu adjacent to the leaving group at neutral or slightly basic pH. The proteasome has an ATP-dependent proteolytic activity. In Caenorhabditis elegans, this protein is Proteasome subunit alpha type-6 (pas-1).